A 411-amino-acid chain; its full sequence is Putative competence-damage inducible protein (411 aa).

The protein belongs to the CinA family.

The sequence is that of Putative competence-damage inducible protein from Desulforamulus reducens (strain ATCC BAA-1160 / DSM 100696 / MI-1) (Desulfotomaculum reducens).